Here is a 505-residue protein sequence, read N- to C-terminus: Beta-glucosidase 18 (505 aa).

An N-terminal signal peptide occupies residues 1–26; that stretch reads MAGGSKTRIHASLVSTLLLLLPLASA. Residue glutamine 46 participates in a beta-D-glucoside binding. N-linked (GlcNAc...) asparagine glycosylation occurs at asparagine 55. Residues histidine 148 and 193–194 contribute to the a beta-D-glucoside site; that span reads NE. Glutamate 194 functions as the Proton donor in the catalytic mechanism. Cysteines 213 and 220 form a disulfide. An a beta-D-glucoside-binding site is contributed by tyrosine 337. Cysteine 345 and cysteine 350 are joined by a disulfide. A beta-D-glucoside contacts are provided by residues glutamate 408, tryptophan 457, 464-465, and phenylalanine 473; that span reads EW. Glutamate 408 acts as the Nucleophile in catalysis.

The protein belongs to the glycosyl hydrolase 1 family. As to expression, expressed in roots, leaves, flowers and pollen.

The catalysed reaction is Hydrolysis of terminal, non-reducing beta-D-glucosyl residues with release of beta-D-glucose.. Its function is as follows. Hydrolyzes glycosides and monolignol glucosides. Can hydrolyze para-nitrophenyl beta-D-glucopyranoside (pNPGlc) in vitro. Hydrolyzes para-nitrophenyl beta-D-fucopyranoside, para-nitrophenyl beta-D-galactopyranoside and para-nitrophenyl beta-D-xylopyranoside in vitro. Hydrolyzes the monolignol glucosides coniferin and syringin with high catalytic efficiencies. The chain is Beta-glucosidase 18 from Oryza sativa subsp. japonica (Rice).